The primary structure comprises 287 residues: Hydroxysteroid 11-beta-dehydrogenase 1-like protein (287 aa).

Residues 1–20 (MMKPFGKVLCAAGSLAVLLA) form the signal peptide. Residues 41–67 (GASA…TARR), 92–93 (DM), and 119–121 (NHI) contribute to the NADP(+) site. Ser170 contributes to the substrate binding site. The Proton acceptor role is filled by Tyr183. NADP(+)-binding positions include 183–187 (YSATK) and 216–222 (GLIDTDA).

This sequence belongs to the short-chain dehydrogenases/reductases (SDR) family.

The protein resides in the secreted. The catalysed reaction is cortisone + NADPH + H(+) = cortisol + NADP(+). Functionally, unidirectional NADP(+)-dependent cortisol dehydrogenase (in vitro). This is Hydroxysteroid 11-beta-dehydrogenase 1-like protein (HSD11B1L) from Gallus gallus (Chicken).